We begin with the raw amino-acid sequence, 161 residues long: Putative pre-16S rRNA nuclease (161 aa).

This sequence belongs to the YqgF nuclease family.

The protein localises to the cytoplasm. Its function is as follows. Could be a nuclease involved in processing of the 5'-end of pre-16S rRNA. The sequence is that of Putative pre-16S rRNA nuclease from Rhodospirillum rubrum (strain ATCC 11170 / ATH 1.1.1 / DSM 467 / LMG 4362 / NCIMB 8255 / S1).